Reading from the N-terminus, the 107-residue chain is Nucleoid-associated protein XF_1808 (107 aa).

This sequence belongs to the YbaB/EbfC family. Homodimer.

The protein localises to the cytoplasm. Its subcellular location is the nucleoid. Its function is as follows. Binds to DNA and alters its conformation. May be involved in regulation of gene expression, nucleoid organization and DNA protection. The protein is Nucleoid-associated protein XF_1808 of Xylella fastidiosa (strain 9a5c).